The chain runs to 312 residues: DNA primase small subunit PriS (312 aa).

Active-site residues include Asp-88, Asp-90, and Asp-215.

Belongs to the eukaryotic-type primase small subunit family. In terms of assembly, heterodimer of a small subunit (PriS) and a large subunit (PriL). It depends on Mg(2+) as a cofactor. The cofactor is Mn(2+).

Functionally, catalytic subunit of DNA primase, an RNA polymerase that catalyzes the synthesis of short RNA molecules used as primers for DNA polymerase during DNA replication. The small subunit contains the primase catalytic core and has DNA synthesis activity on its own. Binding to the large subunit stabilizes and modulates the activity, increasing the rate of DNA synthesis while decreasing the length of the DNA fragments, and conferring RNA synthesis capability. The DNA polymerase activity may enable DNA primase to also catalyze primer extension after primer synthesis. May also play a role in DNA repair. The chain is DNA primase small subunit PriS from Pyrobaculum aerophilum (strain ATCC 51768 / DSM 7523 / JCM 9630 / CIP 104966 / NBRC 100827 / IM2).